The chain runs to 122 residues: UPF0382 membrane protein SERP0230 (122 aa).

The next 4 membrane-spanning stretches (helical) occupy residues 3-23, 46-66, 69-89, and 98-118; these read VFII…AFGA, MYHG…SINV, AGWL…FLAL, and ITPI…IATL.

It belongs to the UPF0382 family.

It is found in the cell membrane. This is UPF0382 membrane protein SERP0230 from Staphylococcus epidermidis (strain ATCC 35984 / DSM 28319 / BCRC 17069 / CCUG 31568 / BM 3577 / RP62A).